A 130-amino-acid chain; its full sequence is Small ribosomal subunit protein uS9 (130 aa).

Belongs to the universal ribosomal protein uS9 family.

The protein is Small ribosomal subunit protein uS9 of Serratia proteamaculans (strain 568).